A 306-amino-acid polypeptide reads, in one-letter code: sn-1-specific diacylglycerol lipase ABHD11 (306 aa).

The tract at residues 19–40 (GPSFARVPVAPSSSSGGRGGAE) is disordered. The span at 23 to 33 (ARVPVAPSSSS) shows a compositional bias: low complexity. An N6-succinyllysine modification is found at Lys78. Residues Ser132, Asp228, and His287 each act as charge relay system in the active site.

This sequence belongs to the AB hydrolase superfamily. As to quaternary structure, interacts with OGDH and DLST; this interaction maintains the functional lipoylation of the 2-oxoglutarate dehydrogenase complex. In terms of processing, phosphorylated. In terms of tissue distribution, ubiquitously expressed. Highly expressed in small intestine, prostate and thyroid, while aorta and colon tissues exhibit weak expression levels.

The protein localises to the mitochondrion. Its subcellular location is the mitochondrion matrix. The catalysed reaction is 1-octadecanoyl-2-(5Z,8Z,11Z,14Z-eicosatetraenoyl)-sn-glycerol + H2O = 2-(5Z,8Z,11Z,14Z-eicosatetraenoyl)-glycerol + octadecanoate + H(+). It catalyses the reaction a 1,2-diacyl-sn-glycerol + H2O = a 2-acylglycerol + a fatty acid + H(+). The enzyme catalyses a 1,3-diacyl-sn-glycerol + H2O = a 1-acyl-sn-glycerol + a fatty acid + H(+). It carries out the reaction 1-octadecanoyl-2-(9Z-octadecenoyl)-sn-glycerol + H2O = 2-(9Z-octadecenoyl)-glycerol + octadecanoate + H(+). The catalysed reaction is 1-octadecanoyl-2-(4Z,7Z,10Z,13Z,16Z,19Z-docosahexaenoyl)-sn-glycerol + H2O = 2-(4Z,7Z,10Z,13Z,16Z,19Z-docosahexaenoyl)-glycerol + octadecanoate + H(+). It catalyses the reaction 1,2-didecanoylglycerol + H2O = decanoylglycerol + decanoate + H(+). Its function is as follows. Catalyzes the hydrolysis of diacylglycerol in vitro and may function as a key regulator in lipid metabolism, namely by regulating the intracellular levels of diacylglycerol. 1,2-diacyl-sn-glycerols are the preferred substrate over 1,3-diacyl-sn-glycerols. The enzyme hydrolyzes stearate in preference to palmitate from the sn-1 position of 1,2-diacyl-sn-glycerols. Maintains the functional lipoylation of the 2-oxoglutarate dehydrogenase complex (OGDHc) through its interaction with the OGDHc by preventing the formation of lipoyl adducts. In addition, is also required for the expansion and differentiation of embryonic stem cells (ESCs). This chain is sn-1-specific diacylglycerol lipase ABHD11, found in Homo sapiens (Human).